Here is a 564-residue protein sequence, read N- to C-terminus: Centrosomal protein kizuna (564 aa).

A disordered region spans residues 1–21 (MSEAGRAAAGPCPEVSPSRSQ). Positions 28-50 (RCLRDSETRRLELERKLMEYKSS) form a coiled coil. Disordered regions lie at residues 178 to 201 (QPAA…PTQA), 304 to 345 (TGPQ…EDEP), 442 to 465 (ECGD…PNDS), 487 to 519 (IGNN…RPEF), and 531 to 564 (AFWG…DFYD). A compositionally biased stretch (low complexity) spans 313–324 (QQAASQDSSSSS). Over residues 447-463 (SSVQSNESSYSLPSIPN) the composition is skewed to polar residues. The span at 493–519 (EAKESQEMCSERSSSSERSGDLSRPEF) shows a compositional bias: basic and acidic residues.

The protein belongs to the kizuna family.

Its subcellular location is the cytoplasm. It localises to the cytoskeleton. The protein resides in the microtubule organizing center. It is found in the centrosome. The protein localises to the cilium basal body. Centrosomal protein required for establishing a robust mitotic centrosome architecture that can endure the forces that converge on the centrosomes during spindle formation. Required for stabilizing the expanded pericentriolar material around the centriole. This is Centrosomal protein kizuna (KIZ) from Gallus gallus (Chicken).